A 312-amino-acid chain; its full sequence is Malate dehydrogenase (312 aa).

NAD(+) contacts are provided by residues 7–13 (GAAGGIG) and aspartate 34. Residues arginine 81 and arginine 87 each coordinate substrate. Residues asparagine 94 and 117-119 (ITN) contribute to the NAD(+) site. Substrate is bound by residues asparagine 119 and arginine 153. Catalysis depends on histidine 177, which acts as the Proton acceptor. Methionine 227 serves as a coordination point for NAD(+).

The protein belongs to the LDH/MDH superfamily. MDH type 1 family. As to quaternary structure, homodimer.

It catalyses the reaction (S)-malate + NAD(+) = oxaloacetate + NADH + H(+). Catalyzes the reversible oxidation of malate to oxaloacetate. The protein is Malate dehydrogenase of Cronobacter sakazakii (strain ATCC BAA-894) (Enterobacter sakazakii).